The chain runs to 238 residues: Cysteine-rich venom protein pseudechetoxin-like (238 aa).

A signal peptide spans 1-19 (MIAFIVLLSLAAVLQQSSG). A propeptide spanning residues 20-28 (TVDFASESS) is cleaved from the precursor. The SCP domain maps to 38–164 (VDKHNALRRS…STKYLYVCQY (127 aa)). 8 disulfide bridges follow: C75-C153, C92-C165, C148-C162, C184-C191, C187-C196, C200-C233, C209-C227, and C218-C231. A ShKT domain is found at 200 to 233 (CKHEDDFSNCKALAKNSKCQTAWIKSKCPATCFC).

The protein belongs to the CRISP family. Expressed by the venom gland.

Its subcellular location is the secreted. Functionally, blocks olfactory (CNGA2) and retinal (CNGA1) CNG channel currents. Does not affect neither depolarization- nor caffeine-induced contraction of smooth muscle. This chain is Cysteine-rich venom protein pseudechetoxin-like, found in Hoplocephalus stephensii (Stephens's banded snake).